Consider the following 151-residue polypeptide: Probable cGMP 3',5'-cyclic phosphodiesterase subunit delta (151 aa).

Belongs to the PDE6D/unc-119 family. Interacts with Pde6.

The protein localises to the nucleus. Its subcellular location is the cytoplasm. This is Probable cGMP 3',5'-cyclic phosphodiesterase subunit delta from Anopheles gambiae (African malaria mosquito).